A 685-amino-acid chain; its full sequence is UvrABC system protein B (685 aa).

The 382-residue stretch at 39–420 (EGIGDGLMYQ…TYEAEHQGQV (382 aa)) folds into the Helicase ATP-binding domain. 52-59 (GVTGSGKT) provides a ligand contact to ATP. The short motif at 105–128 (YYDYYQPEAYVPSRDLFIEKDSSI) is the Beta-hairpin element. In terms of domain architecture, Helicase C-terminal spans 443–596 (QVDDLLSEAK…QIAFNQANGI (154 aa)). Positions 640 to 675 (AKSIRKLEKEMQEHARNLEFEKAAAARDELFRLRQR) constitute a UVR domain.

The protein belongs to the UvrB family. Forms a heterotetramer with UvrA during the search for lesions. Interacts with UvrC in an incision complex.

Its subcellular location is the cytoplasm. Functionally, the UvrABC repair system catalyzes the recognition and processing of DNA lesions. A damage recognition complex composed of 2 UvrA and 2 UvrB subunits scans DNA for abnormalities. Upon binding of the UvrA(2)B(2) complex to a putative damaged site, the DNA wraps around one UvrB monomer. DNA wrap is dependent on ATP binding by UvrB and probably causes local melting of the DNA helix, facilitating insertion of UvrB beta-hairpin between the DNA strands. Then UvrB probes one DNA strand for the presence of a lesion. If a lesion is found the UvrA subunits dissociate and the UvrB-DNA preincision complex is formed. This complex is subsequently bound by UvrC and the second UvrB is released. If no lesion is found, the DNA wraps around the other UvrB subunit that will check the other stand for damage. The chain is UvrABC system protein B from Aromatoleum aromaticum (strain DSM 19018 / LMG 30748 / EbN1) (Azoarcus sp. (strain EbN1)).